Here is a 218-residue protein sequence, read N- to C-terminus: Adenylate kinase (218 aa).

Position 10 to 15 (Gly-10 to Thr-15) interacts with ATP. Residues Ser-30–Val-59 form an NMP region. AMP contacts are provided by residues Thr-31, Arg-36, Gln-57–Val-59, Gly-85–Arg-88, and Gln-92. The LID stretch occupies residues Gly-122–Asp-159. ATP-binding positions include Arg-123 and Ser-132–Tyr-133. 2 residues coordinate AMP: Arg-156 and Arg-167. Gly-203 serves as a coordination point for ATP.

The protein belongs to the adenylate kinase family. Monomer.

The protein localises to the cytoplasm. It catalyses the reaction AMP + ATP = 2 ADP. The protein operates within purine metabolism; AMP biosynthesis via salvage pathway; AMP from ADP: step 1/1. Catalyzes the reversible transfer of the terminal phosphate group between ATP and AMP. Plays an important role in cellular energy homeostasis and in adenine nucleotide metabolism. In Chlorobium chlorochromatii (strain CaD3), this protein is Adenylate kinase.